A 108-amino-acid polypeptide reads, in one-letter code: uncharacterized protein (108 aa).

Residues 1-12 (MSNQQKQLQLPS) are compositionally biased toward polar residues. The disordered stretch occupies residues 1–22 (MSNQQKQLQLPSASIKKPKEKQ).

This is an uncharacterized protein from Dictyostelium discoideum (Social amoeba).